The chain runs to 358 residues: Psilocybin cluster transcription regulator (358 aa).

Disordered stretches follow at residues 1-40 (MAPATPATHDPALSHGAPPAPGAPAPANAPPNASGDIAGM) and 62-212 (SGGK…RRRR). Residues 18-29 (PPAPGAPAPANA) show a composition bias toward pro residues. Positions 79–91 (QTLSNLAQAQPYG) are enriched in polar residues. Over residues 179–190 (PTTGRRGGRSAT) the composition is skewed to low complexity. Residues 195 to 209 (EWSRQRKDNHKEVER) are compositionally biased toward basic and acidic residues. The interval 199–212 (QRKDNHKEVERRRR) is basic motif. The region spanning 199–249 (QRKDNHKEVERRRRGNINEGINELGRIVPSGSGEKAKGAILSRAVQYIHHL) is the bHLH domain. The helix-loop-helix motif stretch occupies residues 213-249 (GNINEGINELGRIVPSGSGEKAKGAILSRAVQYIHHL). Residues 264–306 (KLLMDQAMGDLQAQLEEVKRLWEEERMARTRLEAELEVLRNMN) are a coiled coil. Residues 308–358 (VNAGSAPASKDESAAGTKRRSTDGAEAATAATESSTANAEGERDGKRQRTE) are disordered. The segment covering 331–346 (GAEAATAATESSTANA) has biased composition (low complexity). The segment covering 347–358 (EGERDGKRQRTE) has biased composition (basic and acidic residues).

Its subcellular location is the nucleus. Transcription factor that may regulate the expression of the gene cluster that mediates the biosynthesis of psilocybin, a psychotropic tryptamine-derived natural product. This is Psilocybin cluster transcription regulator from Psilocybe cubensis (Psychedelic mushroom).